Reading from the N-terminus, the 227-residue chain is PKHD-type hydroxylase GOX0559 (227 aa).

The region spanning 78-178 is the Fe2OG dioxygenase domain; the sequence is RVYPPLFNRY…RWASFFWSQS (101 aa). Residues histidine 96, aspartate 98, and histidine 159 each coordinate Fe cation. A 2-oxoglutarate-binding site is contributed by arginine 169.

Fe(2+) serves as cofactor. Requires L-ascorbate as cofactor.

The protein is PKHD-type hydroxylase GOX0559 of Gluconobacter oxydans (strain 621H) (Gluconobacter suboxydans).